Consider the following 104-residue polypeptide: Protamine-3 (104 aa).

Positions 1–104 (MGSRCAKLST…PSPEPKQKHS (104 aa)) are disordered. Residues 45 to 70 (EGEEEEEDEEDEEEEDDDEEDEEEEQ) show a composition bias toward acidic residues. S96 is modified (phosphoserine).

The protein belongs to the protamine P3 family. Testis.

It is found in the nucleus. It localises to the chromosome. Its function is as follows. Protamines substitute for histones in the chromatin of sperm during the haploid phase of spermatogenesis. They compact sperm DNA into a highly condensed, stable and inactive complex. The chain is Protamine-3 (Prm3) from Rattus norvegicus (Rat).